Here is a 360-residue protein sequence, read N- to C-terminus: Phospho-N-acetylmuramoyl-pentapeptide-transferase (360 aa).

Transmembrane regions (helical) follow at residues 26 to 46 (AIVS…RLIA), 72 to 92 (PTMG…LWAY), 94 to 114 (SNPY…VGFV), 132 to 152 (WKYF…YITG), 168 to 188 (VMPQ…VGTG), 199 to 219 (GLAI…AWAT), 236 to 256 (AGEL…FLWF), 263 to 283 (VFMG…IAVL), 288 to 308 (FLLV…ILQV), and 338 to 358 (VIVR…ATLK).

The protein belongs to the glycosyltransferase 4 family. MraY subfamily. Mg(2+) is required as a cofactor.

It localises to the cell inner membrane. The enzyme catalyses UDP-N-acetyl-alpha-D-muramoyl-L-alanyl-gamma-D-glutamyl-meso-2,6-diaminopimeloyl-D-alanyl-D-alanine + di-trans,octa-cis-undecaprenyl phosphate = di-trans,octa-cis-undecaprenyl diphospho-N-acetyl-alpha-D-muramoyl-L-alanyl-D-glutamyl-meso-2,6-diaminopimeloyl-D-alanyl-D-alanine + UMP. Its pathway is cell wall biogenesis; peptidoglycan biosynthesis. Catalyzes the initial step of the lipid cycle reactions in the biosynthesis of the cell wall peptidoglycan: transfers peptidoglycan precursor phospho-MurNAc-pentapeptide from UDP-MurNAc-pentapeptide onto the lipid carrier undecaprenyl phosphate, yielding undecaprenyl-pyrophosphoryl-MurNAc-pentapeptide, known as lipid I. This chain is Phospho-N-acetylmuramoyl-pentapeptide-transferase, found in Cronobacter sakazakii (strain ATCC BAA-894) (Enterobacter sakazakii).